The sequence spans 561 residues: Putative transport protein AHA_2450 (561 aa).

The next 5 helical transmembrane spans lie at 8 to 28, 37 to 57, 66 to 86, 90 to 110, and 161 to 181; these read LLHQSDSLLLFVVLAFGLLLG, IGNTIGVLFTALLFGQMGFEF, FMLFIFCVGIEAGPHFFSVFL, IHYITLTLVILLTALFLTVGL, and NMGIGYALTYLVGLVGLMLVV. 2 consecutive RCK C-terminal domains span residues 206-291 and 293-376; these read SDNE…NYRN and KEVF…KIGF. Transmembrane regions (helical) follow at residues 386-406, 409-429, 450-470, 476-496, and 541-561; these read LVAFTTFFVLGLLIGSVSLVF, LEFGLGNAVGLLLAGILMGYL, LGLAVFMVSTGLKAGGGILDH, AVVLFSGMLVTTLPVLVGYLF, and TYAVANVMLTLAGSFIIGFWF.

It belongs to the AAE transporter (TC 2.A.81) family. YbjL subfamily.

The protein resides in the cell membrane. In Aeromonas hydrophila subsp. hydrophila (strain ATCC 7966 / DSM 30187 / BCRC 13018 / CCUG 14551 / JCM 1027 / KCTC 2358 / NCIMB 9240 / NCTC 8049), this protein is Putative transport protein AHA_2450.